A 264-amino-acid polypeptide reads, in one-letter code: Apolipoprotein A-I (264 aa).

The first 18 residues, 1–18, serve as a signal peptide directing secretion; it reads MRVVVVTLALLFLTGTQA. Tandem repeats lie at residues 67–88 and 89–110. Residues 67–264 form a 10 X approximate tandem repeats region; the sequence is LKLADNLDTL…LLDELQKTVA (198 aa). The 3; half-length repeat unit spans residues 111–121; it reads KDLEEVKEKIR. Tandem repeats lie at residues 122 to 143, 144 to 165, 166 to 187, 188 to 209, and 210 to 231. Residues 232-242 form a 9; half-length repeat; sequence PLVQDFKERLT. The stretch at 243–264 is repeat 10; the sequence is PYAENLKTRFISLLDELQKTVA.

The protein belongs to the apolipoprotein A1/A4/E family. Major protein of plasma HDL, also found in chylomicrons.

The protein resides in the secreted. In terms of biological role, participates in the reverse transport of cholesterol from tissues to the liver for excretion by promoting cholesterol efflux from tissues and by acting as a cofactor for the lecithin cholesterol acyltransferase (LCAT). This is Apolipoprotein A-I (APOA1) from Anas platyrhynchos (Mallard).